Consider the following 188-residue polypeptide: MTSIDDAPQRSAAHDAVAEVLRGHIRDIPDWPQPGVVFKDITPLLATPTAFGVVIGALADAARALGATTIAGIEARGFLLAAPVADRLGTGLVPIRKQGKLPGPTRSASYDLEYGAATIEIHADAVHDGDRVLLVDDVLATGGTAAAAHSLLAAGGGEVVGLAVLMELSFLPGRDRVAPLDVVSLLTI.

Belongs to the purine/pyrimidine phosphoribosyltransferase family. As to quaternary structure, homodimer.

It is found in the cytoplasm. It catalyses the reaction AMP + diphosphate = 5-phospho-alpha-D-ribose 1-diphosphate + adenine. It participates in purine metabolism; AMP biosynthesis via salvage pathway; AMP from adenine: step 1/1. Its function is as follows. Catalyzes a salvage reaction resulting in the formation of AMP, that is energically less costly than de novo synthesis. The sequence is that of Adenine phosphoribosyltransferase from Frankia casuarinae (strain DSM 45818 / CECT 9043 / HFP020203 / CcI3).